The following is a 362-amino-acid chain: 3-isopropylmalate dehydrogenase (362 aa).

An NAD(+)-binding site is contributed by 78–91 (GYKWDSLPPHQRPE). Residues Arg-98, Arg-108, Arg-136, and Asp-226 each contribute to the substrate site. Residues Asp-226, Asp-250, and Asp-254 each contribute to the Mg(2+) site. 284-296 (GSAPDIAGLDKAN) is a binding site for NAD(+).

The protein belongs to the isocitrate and isopropylmalate dehydrogenases family. LeuB type 1 subfamily. As to quaternary structure, homodimer. Mg(2+) serves as cofactor. It depends on Mn(2+) as a cofactor.

It localises to the cytoplasm. The enzyme catalyses (2R,3S)-3-isopropylmalate + NAD(+) = 4-methyl-2-oxopentanoate + CO2 + NADH. Its pathway is amino-acid biosynthesis; L-leucine biosynthesis; L-leucine from 3-methyl-2-oxobutanoate: step 3/4. Its function is as follows. Catalyzes the oxidation of 3-carboxy-2-hydroxy-4-methylpentanoate (3-isopropylmalate) to 3-carboxy-4-methyl-2-oxopentanoate. The product decarboxylates to 4-methyl-2 oxopentanoate. The sequence is that of 3-isopropylmalate dehydrogenase from Trichormus variabilis (strain ATCC 29413 / PCC 7937) (Anabaena variabilis).